We begin with the raw amino-acid sequence, 345 residues long: MGIKQLSKLLRENSKRGIRERPLVYYSSKKVAIDASMSMYQFLIAVRSGGATLGNEDSPTSHLVGFFYRTIRMVELGITPVYVFDGVPPEIKMKELEKRKERRAAADREYREASEVGDKELMEMYDKRKTKVTGVHVDECKRLLGLMGIPFETAPSEAEAYCALLCKKKAVYGVATEDMDALTFGSPVVLRNFNGTQSKRLPVMEHNLPQILEDLSLDHSEFIDLCILLGCDYCSTLKGIGPKKALGLIKKHRSIGNILKNEDLEVPGDWRYSDAQKIFGSLAEIGEIRDFNISWDSIDRNGIVNFLVEEKGFDLERVNKGIDKLINSRKKGTQGRLDCFITRSK.

An N-domain region spans residues 1 to 103 (MGIKQLSKLL…KELEKRKERR (103 aa)). Asp-34 is a binding site for Mg(2+). DNA-binding residues include Arg-47 and Arg-69. Mg(2+) is bound by residues Asp-85, Glu-157, Glu-159, Asp-178, and Asp-180. The segment at 121-252 (LMEMYDKRKT…KKALGLIKKH (132 aa)) is I-domain. Glu-157 contacts DNA. Residues Gly-230 and Asp-232 each contribute to the DNA site. Mg(2+) is bound at residue Asp-232. An interaction with PCNA region spans residues 333-341 (TQGRLDCFI).

Belongs to the XPG/RAD2 endonuclease family. FEN1 subfamily. As to quaternary structure, interacts with PCNA. Three molecules of FEN1 bind to one PCNA trimer with each molecule binding to one PCNA monomer. PCNA stimulates the nuclease activity without altering cleavage specificity. It depends on Mg(2+) as a cofactor. In terms of processing, phosphorylated. Phosphorylation upon DNA damage induces relocalization to the nuclear plasma.

It is found in the nucleus. It localises to the nucleolus. The protein localises to the nucleoplasm. The protein resides in the mitochondrion. In terms of biological role, structure-specific nuclease with 5'-flap endonuclease and 5'-3' exonuclease activities involved in DNA replication and repair. During DNA replication, cleaves the 5'-overhanging flap structure that is generated by displacement synthesis when DNA polymerase encounters the 5'-end of a downstream Okazaki fragment. It enters the flap from the 5'-end and then tracks to cleave the flap base, leaving a nick for ligation. Also involved in the long patch base excision repair (LP-BER) pathway, by cleaving within the apurinic/apyrimidinic (AP) site-terminated flap. Acts as a genome stabilization factor that prevents flaps from equilibrating into structures that lead to duplications and deletions. Also possesses 5'-3' exonuclease activity on nicked or gapped double-stranded DNA, and exhibits RNase H activity. Also involved in replication and repair of rDNA and in repairing mitochondrial DNA. The sequence is that of Flap endonuclease 1 from Encephalitozoon cuniculi (strain GB-M1) (Microsporidian parasite).